The sequence spans 186 residues: Adenine phosphoribosyltransferase (186 aa).

This sequence belongs to the purine/pyrimidine phosphoribosyltransferase family. Homodimer.

Its subcellular location is the cytoplasm. It catalyses the reaction AMP + diphosphate = 5-phospho-alpha-D-ribose 1-diphosphate + adenine. It functions in the pathway purine metabolism; AMP biosynthesis via salvage pathway; AMP from adenine: step 1/1. Functionally, catalyzes a salvage reaction resulting in the formation of AMP, that is energically less costly than de novo synthesis. The sequence is that of Adenine phosphoribosyltransferase from Xanthomonas oryzae pv. oryzae (strain PXO99A).